A 1187-amino-acid polypeptide reads, in one-letter code: Tyrosine-protein phosphatase non-receptor type 14 (1187 aa).

The FERM domain maps to 21 to 306 (FVTRIRLLDS…TRHKFYKQNK (286 aa)). Phosphoserine occurs at positions 314, 461, and 486. A compositionally biased stretch (polar residues) spans 510–524 (LVSPSDQRNPKNNVV). The disordered stretch occupies residues 510 to 531 (LVSPSDQRNPKNNVVPSKPGAS). 4 positions are modified to phosphoserine: serine 591, serine 593, serine 594, and serine 642. Disordered stretches follow at residues 671-690 (LREQ…PQLP) and 787-824 (KAIS…KKEP). Positions 815 to 824 (SVKERVKKEP) are enriched in basic and acidic residues. A Phosphoserine modification is found at serine 831. Residues 909-1180 (VFTEYEQIPK…KFVYQVLIQF (272 aa)) enclose the Tyrosine-protein phosphatase domain. Substrate-binding positions include aspartate 1079, 1121 to 1127 (CSAGVGR), and glutamine 1165. The Phosphocysteine intermediate role is filled by cysteine 1121.

It belongs to the protein-tyrosine phosphatase family. Non-receptor class subfamily. In terms of assembly, interacts with FLT4; the interaction is enhanced by stimulation with VEGFC. Interacts (via PPxY motifs) with YAP1 (via WW domains); this interaction leads to the cytoplasmic sequestration of YAP1 and inhibits its transcriptional co-activator activity. In terms of processing, ubiquitinated by the ECS (Elongin BC-CUL2/5-SOCS-box protein)/LRR1 E3 ligase complex and subsequently targeted to proteasomal degradation. In terms of tissue distribution, ubiquitous.

It is found in the cytoplasm. The protein localises to the cytoskeleton. The protein resides in the nucleus. It catalyses the reaction O-phospho-L-tyrosyl-[protein] + H2O = L-tyrosyl-[protein] + phosphate. Functionally, protein tyrosine phosphatase which may play a role in the regulation of lymphangiogenesis, cell-cell adhesion, cell-matrix adhesion, cell migration, cell growth and also regulates TGF-beta gene expression, thereby modulating epithelial-mesenchymal transition. Mediates beta-catenin dephosphorylation at adhesion junctions. Acts as a negative regulator of the oncogenic property of YAP, a downstream target of the hippo pathway, in a cell density-dependent manner. May function as a tumor suppressor. This Homo sapiens (Human) protein is Tyrosine-protein phosphatase non-receptor type 14 (PTPN14).